A 162-amino-acid polypeptide reads, in one-letter code: Peptide deformylase-like (162 aa).

It belongs to the polypeptide deformylase family.

This is Peptide deformylase-like from Staphylococcus aureus (strain COL).